We begin with the raw amino-acid sequence, 314 residues long: Protein phosphatase PTC7 homolog fig (314 aa).

A PPM-type phosphatase domain is found at 43-309 (PYLVTVVQGR…DDITLILSSV (267 aa)). Residues aspartate 87, glycine 88, and aspartate 232 each coordinate Mn(2+).

Belongs to the PP2C family. It depends on Mg(2+) as a cofactor. The cofactor is Mn(2+).

It carries out the reaction O-phospho-L-seryl-[protein] + H2O = L-seryl-[protein] + phosphate. The catalysed reaction is O-phospho-L-threonyl-[protein] + H2O = L-threonyl-[protein] + phosphate. The polypeptide is Protein phosphatase PTC7 homolog fig (Drosophila melanogaster (Fruit fly)).